A 1279-amino-acid chain; its full sequence is Sterol regulatory element-binding protein cleavage-activating protein (1279 aa).

At 1–18 (MTLTERLREKISQAFYNH) the chain is on the cytoplasmic side. A helical membrane pass occupies residues 19-39 (GLLCASYPIPIILFTGLCILA). Over 40 to 279 (CCYPLLKLPL…SLVHVHFKEE (240 aa)) the chain is Lumenal. Positions 46 to 284 (KLPLPGTGPV…HFKEEIGIAE (239 aa)) are loop-1. Residues 60–81 (PVKDYSPPPSASDHKPGEPSEQ) form a disordered region. Residue asparagine 263 is glycosylated (N-linked (GlcNAc...) asparagine). A helical membrane pass occupies residues 280–300 (IGIAELIPLVTTYIILFAYIY). In terms of domain architecture, SSD spans 284–442 (ELIPLVTTYI…MPFFTTVLSI (159 aa)). Over 301 to 312 (FSTRKIDMVKSK) the chain is Cytoplasmic. Residues 313 to 333 (WGLALAAVVTVLSSLLMSVGL) traverse the membrane as a helical segment. Topologically, residues 334–344 (CTLFGLTPTLN) are lumenal. The chain crosses the membrane as a helical span at residues 345 to 365 (GGEIFPYLVVVIGLENVLVLT). Residues 366-401 (KSVVSTPVDLEVKLRIAQGLSSESWSIMKNMATELG) are Cytoplasmic-facing. The helical transmembrane segment at 402-422 (IILIGYFTLVPAIQEFCLFAV) threads the bilayer. Position 423 (valine 423) is a topological domain, lumenal. The chain crosses the membrane as a helical span at residues 424 to 444 (GLVSDFFLQMPFFTTVLSIDI). Over 445-518 (RRMELADLNK…FLARTRLAQR (74 aa)) the chain is Cytoplasmic. Residues 447–452 (MELADL) carry the ER export signal motif. Glycyl lysine isopeptide (Lys-Gly) (interchain with G-Cter in ubiquitin) cross-links involve residues lysine 454 and lysine 466. A helical membrane pass occupies residues 519–539 (LIMAGTVVWIGILAYTDPAGL). The segment at 535–710 (DPAGLRTYLA…QAHRDVTLYK (176 aa)) is loop-7. Residues 540–707 (RTYLAAQVTE…GVAQAHRDVT (168 aa)) lie on the Lumenal side of the membrane. Positions 588–617 (LENQTLPGEPPEPGGQAEGVHDSPAPEVTW) are disordered. N-linked (GlcNAc...) asparagine glycans are attached at residues asparagine 590 and asparagine 641. A disordered region spans residues 668–696 (EGRHPQDSRSAWSPPQPAQGGLWDAGPKG). The helical transmembrane segment at 708-728 (LYKVAALGLATGILLVLLLCL) threads the bilayer. The Cytoplasmic segment spans residues 729 to 1279 (YRVLCPRNYG…YVPSVLEKLD (551 aa)). The interaction with SREBF2 stretch occupies residues 730 to 1279 (RVLCPRNYGQ…YVPSVLEKLD (550 aa)). The stretch at 770-810 (VLRGHLMDIECLASDGMLLVSCCLAGHVCVWDAQTGDCLTR) is one WD 1 repeat. 4 positions are modified to phosphoserine: serine 821, serine 837, serine 843, and serine 850. 3 disordered regions span residues 834 to 868 (ERLSDGGKASPEEPGDSPPLRHRPRGTPLPSLFGD), 883 to 903 (HPRLPELDHPEPRHRSGCRRT), and 925 to 959 (VPMHTPAPRPPSPGPTPPQTPEDEGSFPPEKGSPS). Over residues 885–896 (RLPELDHPEPRH) the composition is skewed to basic and acidic residues. A compositionally biased stretch (pro residues) spans 929-944 (TPAPRPPSPGPTPPQT). The residue at position 936 (serine 936) is a Phosphoserine. WD repeat units lie at residues 952 to 1002 (PPEK…LRCS) and 1005 to 1042 (EVASGITALVFLDKRIVAARLNGSLDFFSLETHTALSP). Residue arginine 1051 is modified to Omega-N-methylarginine. WD repeat units follow at residues 1077–1114 (AHQKPITALKAAAGRLVTGSQDHTLRVFRLEDSCCLFT), 1117–1155 (GHSGAITTVYIDQTMVLASGGQDGAICLWDVLTGSRVSH), 1158–1195 (AHRGDVTSLTCTTSCVISSGLDDLISIWDRSTGIKLYS), and 1197–1235 (QQDLGCGASLGVISDNLLVTGGQGCVSFWDLNYGDLLQT).

This sequence belongs to the WD repeat SCAP family. In terms of assembly, membrane region forms a homotetramer. Component of the SCAP-SREBP complex (composed of SCAP and SREBF1/SREBP1 or SREBF2/SREBP2); interacts with SREBF1/SREBP1 or SREBF2/SREBP2 through its C-terminal cytoplasmic domain. Forms a ternary complex with INSIG1 or INSIG2 through its transmembrane domains at high sterol concentrations. Interacts with PAQR3; the interaction anchors the SCAP-SREBP complex to the Golgi apparatus in low cholesterol conditions. Interacts with the SEC23-SEC24 complex in a SAR1-GTP-dependent manner through an ER export signal in its third cytoplasmic loop. Interacts with RNF139; the interaction inhibits the interaction of SCAP with SEC24B and hampering the ER to Golgi transport of the SCAP-SREBP complex. Interacts with SPRING1. Ubiquitinated at Lys-454 and Lys-466. RNF145 triggers ubiquitination of SCAP, likely inhibiting SCAP-SREBP complex transport to the Golgi apparatus and the subsequent processing/maturation of SREBF2/SREBP2. In terms of tissue distribution, widely expressed with higher levels in lung, kidney, gut, brain and adipose tissue. As to expression, expressed in liver and muscle. Isoform 3 expressed in testis. Expressed in testis.

Its subcellular location is the endoplasmic reticulum membrane. The protein localises to the golgi apparatus membrane. It is found in the cytoplasmic vesicle. The protein resides in the COPII-coated vesicle membrane. Functionally, escort protein required for cholesterol as well as lipid homeostasis. Regulates export of the SCAP-SREBP complex from the endoplasmic reticulum to the Golgi upon low cholesterol, thereby regulating the processing of sterol regulatory element-binding proteins (SREBPs) SREBF1/SREBP1 and SREBF2/SREBP2. At high sterol concentrations, formation of a ternary complex with INSIG (INSIG1 or INSIG2) leads to mask the ER export signal in SCAP, promoting retention of the complex in the endoplasmic reticulum. Low sterol concentrations trigger release of INSIG, a conformational change in the SSD domain of SCAP, unmasking of the ER export signal, promoting recruitment into COPII-coated vesicles and transport of the SCAP-SREBP to the Golgi: in the Golgi, SREBPs are then processed, releasing the transcription factor fragment of SREBPs from the membrane, its import into the nucleus and up-regulation of LDLR, INSIG1 and the mevalonate pathway. Binds cholesterol via its SSD domain. The chain is Sterol regulatory element-binding protein cleavage-activating protein from Sus scrofa (Pig).